The primary structure comprises 333 residues: Foldase protein PrsA (333 aa).

The signal sequence occupies residues 1–22 (MKSAKQIATALLVGMFTFSAVG). C23 carries N-palmitoyl cysteine lipidation. The S-diacylglycerol cysteine moiety is linked to residue C23. In terms of domain architecture, PpiC spans 192–283 (PNTVHLAHIL…FGWHVIKCIK (92 aa)).

This sequence belongs to the PrsA family.

Its subcellular location is the cell membrane. It carries out the reaction [protein]-peptidylproline (omega=180) = [protein]-peptidylproline (omega=0). In terms of biological role, plays a major role in protein secretion by helping the post-translocational extracellular folding of several secreted proteins. The chain is Foldase protein PrsA from Clostridium acetobutylicum (strain ATCC 824 / DSM 792 / JCM 1419 / IAM 19013 / LMG 5710 / NBRC 13948 / NRRL B-527 / VKM B-1787 / 2291 / W).